Consider the following 289-residue polypeptide: 4-diphosphocytidyl-2-C-methyl-D-erythritol kinase (289 aa).

Lys11 is an active-site residue. Position 93 to 103 (93 to 103 (PLAAGLAGGSA)) interacts with ATP. Residue Asp135 is part of the active site.

This sequence belongs to the GHMP kinase family. IspE subfamily.

It carries out the reaction 4-CDP-2-C-methyl-D-erythritol + ATP = 4-CDP-2-C-methyl-D-erythritol 2-phosphate + ADP + H(+). It participates in isoprenoid biosynthesis; isopentenyl diphosphate biosynthesis via DXP pathway; isopentenyl diphosphate from 1-deoxy-D-xylulose 5-phosphate: step 3/6. Its function is as follows. Catalyzes the phosphorylation of the position 2 hydroxy group of 4-diphosphocytidyl-2C-methyl-D-erythritol. The sequence is that of 4-diphosphocytidyl-2-C-methyl-D-erythritol kinase from Thermoanaerobacter sp. (strain X514).